Here is a 286-residue protein sequence, read N- to C-terminus: Flagellar filament 31.3 kDa core protein (286 aa).

Belongs to the bacterial flagellin family. As to quaternary structure, the core of the flagellum consists of several antigenically related polypeptides. Post-translationally, glycosylated. Glycosylation is not essential for motility.

The protein resides in the periplasmic flagellum. Its subcellular location is the periplasm. In terms of biological role, component of the core of the flagella. The sequence is that of Flagellar filament 31.3 kDa core protein (flaB2) from Treponema maltophilum.